Reading from the N-terminus, the 248-residue chain is Ribosomal RNA small subunit methyltransferase J (248 aa).

S-adenosyl-L-methionine-binding positions include 101–102, 117–118, 153–154, and aspartate 171; these read RD, ER, and SS.

It belongs to the methyltransferase superfamily. RsmJ family.

The protein resides in the cytoplasm. The enzyme catalyses guanosine(1516) in 16S rRNA + S-adenosyl-L-methionine = N(2)-methylguanosine(1516) in 16S rRNA + S-adenosyl-L-homocysteine + H(+). Functionally, specifically methylates the guanosine in position 1516 of 16S rRNA. The chain is Ribosomal RNA small subunit methyltransferase J from Pectobacterium atrosepticum (strain SCRI 1043 / ATCC BAA-672) (Erwinia carotovora subsp. atroseptica).